We begin with the raw amino-acid sequence, 216 residues long: Peroxiredoxin (216 aa).

Residues 2 to 158 (VVIGEKFPEV…ILRLVKALKV (157 aa)) enclose the Thioredoxin domain. C46 serves as the catalytic Cysteine sulfenic acid (-SOH) intermediate. Residue R121 participates in substrate binding. The cysteines at positions 205 and 211 are disulfide-linked.

It belongs to the peroxiredoxin family. Prx6 subfamily. In terms of assembly, homodecamer. Pentamer of dimers that assemble into a ring structure.

The protein resides in the cytoplasm. The catalysed reaction is a hydroperoxide + [thioredoxin]-dithiol = an alcohol + [thioredoxin]-disulfide + H2O. Its function is as follows. Thiol-specific peroxidase that catalyzes the reduction of hydrogen peroxide and organic hydroperoxides to water and alcohols, respectively. Plays a role in cell protection against oxidative stress by detoxifying peroxides. The chain is Peroxiredoxin from Thermococcus kodakarensis (strain ATCC BAA-918 / JCM 12380 / KOD1) (Pyrococcus kodakaraensis (strain KOD1)).